The chain runs to 314 residues: Small ribosomal subunit biogenesis GTPase RsgA (314 aa).

The tract at residues 1 to 21 is disordered; it reads MKRAPTKQPAKPAARGGERAQ. The CP-type G domain maps to 85-246; the sequence is SDQFKSKLFA…LIDSPGFQEF (162 aa). Residues 134-137 and 188-196 contribute to the GTP site; these read NKID and GQSGMGKST. Positions 270, 275, 277, and 283 each coordinate Zn(2+).

The protein belongs to the TRAFAC class YlqF/YawG GTPase family. RsgA subfamily. As to quaternary structure, monomer. Associates with 30S ribosomal subunit, binds 16S rRNA. Zn(2+) serves as cofactor.

It localises to the cytoplasm. Functionally, one of several proteins that assist in the late maturation steps of the functional core of the 30S ribosomal subunit. Helps release RbfA from mature subunits. May play a role in the assembly of ribosomal proteins into the subunit. Circularly permuted GTPase that catalyzes slow GTP hydrolysis, GTPase activity is stimulated by the 30S ribosomal subunit. This Burkholderia mallei (strain ATCC 23344) protein is Small ribosomal subunit biogenesis GTPase RsgA.